The following is a 215-amino-acid chain: Pyrrolidone-carboxylate peptidase (215 aa).

Residues Glu80, Cys143, and His167 contribute to the active site.

This sequence belongs to the peptidase C15 family. Homotetramer.

It is found in the cytoplasm. It catalyses the reaction Release of an N-terminal pyroglutamyl group from a polypeptide, the second amino acid generally not being Pro.. Removes 5-oxoproline from various penultimate amino acid residues except L-proline. The chain is Pyrrolidone-carboxylate peptidase from Bacillus cereus (strain ATCC 10987 / NRS 248).